The primary structure comprises 235 residues: tRNA (guanine-N(7)-)-methyltransferase (235 aa).

S-adenosyl-L-methionine is bound by residues Gly-60, 83–84 (EI), 116–117 (NA), and Leu-136. The active site involves Asp-139. 214 to 216 (SEE) is a binding site for S-adenosyl-L-methionine.

Belongs to the class I-like SAM-binding methyltransferase superfamily. TrmB family.

The protein resides in the nucleus. It carries out the reaction guanosine(46) in tRNA + S-adenosyl-L-methionine = N(7)-methylguanosine(46) in tRNA + S-adenosyl-L-homocysteine. It functions in the pathway tRNA modification; N(7)-methylguanine-tRNA biosynthesis. Functionally, catalyzes the formation of N(7)-methylguanine at position 46 (m7G46) in tRNA. The protein is tRNA (guanine-N(7)-)-methyltransferase of Anopheles gambiae (African malaria mosquito).